The primary structure comprises 469 residues: 3-isopropylmalate dehydratase large subunit (469 aa).

Residues Cys-347, Cys-407, and Cys-410 each coordinate [4Fe-4S] cluster.

The protein belongs to the aconitase/IPM isomerase family. LeuC type 1 subfamily. In terms of assembly, heterodimer of LeuC and LeuD. [4Fe-4S] cluster is required as a cofactor.

It carries out the reaction (2R,3S)-3-isopropylmalate = (2S)-2-isopropylmalate. It participates in amino-acid biosynthesis; L-leucine biosynthesis; L-leucine from 3-methyl-2-oxobutanoate: step 2/4. Functionally, catalyzes the isomerization between 2-isopropylmalate and 3-isopropylmalate, via the formation of 2-isopropylmaleate. This Synechococcus sp. (strain RCC307) protein is 3-isopropylmalate dehydratase large subunit.